We begin with the raw amino-acid sequence, 2513 residues long: Highly reducing polyketide synthase ACRTS2 (2513 aa).

In terms of domain architecture, Ketosynthase family 3 (KS3) spans 4 to 429; sequence DTPVAIIGVS…GSSSAVIIDR (426 aa). Catalysis depends on for beta-ketoacyl synthase activity residues cysteine 174, histidine 313, and histidine 353. The malonyl-CoA:ACP transacylase (MAT) domain stretch occupies residues 547–875; that stretch reads VFTGQGAQYA…NYLPSLLRGT (329 aa). The active-site For malonyltransferase activity is serine 635. Residues 942–1074 are N-terminal hotdog fold; that stretch reads HALIGRKAPS…GKIEPEIADL (133 aa). Residues 942 to 1253 are dehydratase (DH) domain; it reads HALIGRKAPS…TFRTVSSADD (312 aa). The region spanning 942–1254 is the PKS/mFAS DH domain; that stretch reads HALIGRKAPS…FRTVSSADDQ (313 aa). Histidine 974 functions as the Proton acceptor; for dehydratase activity in the catalytic mechanism. Residues 1092–1254 form a C-terminal hotdog fold region; that stretch reads AGVIEHDMDN…FRTVSSADDQ (163 aa). Catalysis depends on aspartate 1161, which acts as the Proton donor; for dehydratase activity. The methyltransferase (CMet) domain stretch occupies residues 1407-1600; sequence SKIIGYLTEN…IPTNYRTDNP (194 aa). The enoylreductase (ER) domain stretch occupies residues 1816-2127; the sequence is GSPDTIYFRR…SRDHIGRLVV (312 aa). A ketoreductase (KR) domain region spans residues 2152 to 2327; that stretch reads ATYLVAGGTR…YTVSIGLPVV (176 aa). Residues 2433-2510 enclose the Carrier domain; the sequence is DPLTGLIEAL…ALAVNILAQR (78 aa). An O-(pantetheine 4'-phosphoryl)serine modification is found at serine 2470.

Its pathway is mycotoxin biosynthesis. Highly reducing polyketide synthase; part of the gene cluster that mediates the biosynthesis of the host-selective toxins (HSTs) ACR-toxins responsible for brown spot of rough lemon disease by the rough lemon pathotype. ACR-toxins cause uncoupling of mitochondrial oxidative-phosphorylation similar to that of classic protonophore. The structure of the major form of ACR-toxin (ACR-toxin I) consists of an alpha-dihydropyrone ring in a 19-carbon polyalcohol, a typical polyketide structure. Minor toxins were characterized as having a pyrone ring with polyalcohol side chains different in length and showing weaker toxicity. The highly reducing polyketide synthase ACRTS2 has all necessary enzymatic domains for multiple cycles of condensation and beta-keto processing. The cytochrome P450 monooxygenase ACRTS1 has also been shown to be essential for ACR-toxin biosynthesis, however its exact role in the pathway has not been elucidated yet. The protein is Highly reducing polyketide synthase ACRTS2 of Alternaria alternata (Alternaria rot fungus).